Consider the following 248-residue polypeptide: Non-specific acid phosphatase (248 aa).

The signal sequence occupies residues 1–20 (MKKLLAVFCAGAFVSTSVFA).

This sequence belongs to the class A bacterial acid phosphatase family.

The protein localises to the periplasm. It catalyses the reaction a phosphate monoester + H2O = an alcohol + phosphate. This chain is Non-specific acid phosphatase (phoN), found in Providencia stuartii.